The following is an 800-amino-acid chain: Fibroblast growth factor receptor 3 (800 aa).

The signal sequence occupies residues 1-20 (MVPLCLLLYLATLVFPPVYS). Residues 21–122 (AHLLSPEPTD…YTVKVIDSLS (102 aa)) form the Ig-like C2-type 1 domain. Over 21 to 363 (AHLLSPEPTD…EMEREDDYAD (343 aa)) the chain is Extracellular. An intrachain disulfide couples C55 to C101. N-linked (GlcNAc...) asparagine glycosylation is found at N77, N90, and N112. Residues 124-136 (GDDEDYDEDEDEA) are compositionally biased toward acidic residues. The disordered stretch occupies residues 124-143 (GDDEDYDEDEDEAGNGNAEA). 2 consecutive Ig-like C2-type domains span residues 144–237 (PYWT…YQLD) and 246–348 (PILQ…AWLT). C169 and C221 are oxidised to a cystine. N-linked (GlcNAc...) asparagine glycosylation is found at N218, N255, N287, N308, and N321. A disulfide bridge connects residues C268 and C332. A helical membrane pass occupies residues 364–384 (ILIYVTSCVLFILTMVIIILC). The Cytoplasmic portion of the chain corresponds to 385 to 800 (RMWINTQKTL…HHHSNGVIRT (416 aa)). The region spanning 460–739 (LTLGKPLGEG…RQLVEDHDRV (280 aa)) is the Protein kinase domain. ATP-binding positions include 466-474 (LGEGCFGQV) and K496. The active-site Proton acceptor is the D605. 4 positions are modified to phosphotyrosine; by autocatalysis: Y635, Y636, Y712, and Y748. Residues 764–773 (DSNSTCSSGD) are compositionally biased toward polar residues. Residues 764-800 (DSNSTCSSGDDSVFAHDPLPEEPCLPKHHHSNGVIRT) form a disordered region.

The protein belongs to the protein kinase superfamily. Tyr protein kinase family. Fibroblast growth factor receptor subfamily. As to quaternary structure, monomer. Homodimer after ligand binding. Post-translationally, autophosphorylated. Binding of FGF family members together with heparan sulfate proteoglycan or heparin promotes receptor dimerization and autophosphorylation on tyrosine residues. Autophosphorylation occurs in trans between the two FGFR molecules present in the dimer.

It localises to the cell membrane. It catalyses the reaction L-tyrosyl-[protein] + ATP = O-phospho-L-tyrosyl-[protein] + ADP + H(+). Its activity is regulated as follows. Present in an inactive conformation in the absence of bound ligand. Ligand binding leads to dimerization and activation by autophosphorylation on tyrosine residues. Its function is as follows. Tyrosine-protein kinase that acts as a cell-surface receptor for fibroblast growth factors and plays an essential role in the regulation of cell proliferation, differentiation and apoptosis. Plays an essential role in the regulation of chondrocyte differentiation, proliferation and apoptosis, and is required for normal skeleton development. Regulates both osteogenesis and postnatal bone mineralization by osteoblasts. Promotes apoptosis in chondrocytes, but can also promote cancer cell proliferation. Phosphorylates PLCG1, CBL and FRS2. Ligand binding leads to the activation of several signaling cascades. Activation of PLCG1 leads to the production of the cellular signaling molecules diacylglycerol and inositol 1,4,5-trisphosphate. Phosphorylation of FRS2 triggers recruitment of GRB2, GAB1, PIK3R1 and SOS1, and mediates activation of RAS, MAPK1/ERK2, MAPK3/ERK1 and the MAP kinase signaling pathway, as well as of the AKT1 signaling pathway. The chain is Fibroblast growth factor receptor 3 (fgfr3) from Danio rerio (Zebrafish).